A 223-amino-acid polypeptide reads, in one-letter code: PKHD-type hydroxylase syc1482_d (223 aa).

In terms of domain architecture, Fe2OG dioxygenase spans 78–176 (RVHSLLFSRY…RFACVGWVQS (99 aa)). Residues H96, D98, and H157 each contribute to the Fe cation site. A 2-oxoglutarate-binding site is contributed by R167.

The cofactor is Fe(2+). L-ascorbate serves as cofactor.

The chain is PKHD-type hydroxylase syc1482_d from Synechococcus sp. (strain ATCC 27144 / PCC 6301 / SAUG 1402/1) (Anacystis nidulans).